The sequence spans 734 residues: MWGLLLALAAFAPAVGPALGAPRNSVLGLAQPGTTKVPGSTPALHSSPAQPPAETANGTSEQHVRIRVIKKKKVIMKKRKKLTLTRPTPLVTAGPLVTPTPAGTLDPAEKQETGCPPLGLESLRVSDSRLEASSSQSFGLGPHRGRLNIQSGLEDGDLYDGAWCAEEQDADPWFQVDAGHPTRFSGVITQGRNSVWRYDWVTSYKVQFSNDSRTWWGSRNHSSGMDAVFPANSDPETPVLNLLPEPQVARFIRLLPQTWLQGGAPCLRAEILACPVSDPNDLFLEAPASGSSDPLDFQHHNYKAMRKLMKQVQEQCPNITRIYSIGKSYQGLKLYVMEMSDKPGEHELGEPEVRYVAGMHGNEALGRELLLLLMQFLCHEFLRGNPRVTRLLSEMRIHLLPSMNPDGYEIAYHRGSELVGWAEGRWNNQSIDLNHNFADLNTPLWEAQDDGKVPHIVPNHHLPLPTYYTLPNATVAPETRAVIKWMKRIPFVLSANLHGGELVVSYPFDMTRTPWAARELTPTPDDAVFRWLSTVYAGSNLAMQDTSRRPCHSQDFSVHGNIINGADWHTVPGSMNDFSYLHTNCFEVTVELSCDKFPHENELPQEWENNKDALLTYLEQVRMGIAGVVRDKDTELGIADAVIAVDGINHDVTTAWGGDYWRLLTPGDYMVTASAEGYHSVTRNCRVTFEEGPFPCNFVLTKTPKQRLRELLAAGAKVPPDLRRRLERLRGQKD.

The first 20 residues, 1–20, serve as a signal peptide directing secretion; that stretch reads MWGLLLALAAFAPAVGPALG. The interval 30-62 is disordered; that stretch reads AQPGTTKVPGSTPALHSSPAQPPAETANGTSEQ. The span at 32-48 shows a compositional bias: polar residues; sequence PGTTKVPGSTPALHSSP. Residues asparagine 57, asparagine 210, asparagine 220, and asparagine 318 are each glycosylated (N-linked (GlcNAc...) asparagine). Residues 113–274 enclose the F5/8 type C domain; that stretch reads TGCPPLGLES…PCLRAEILAC (162 aa). Cysteines 115 and 274 form a disulfide. Residues 298-621 form the Peptidase M14 domain; that stretch reads QHHNYKAMRK…DALLTYLEQV (324 aa). Zn(2+) is bound by residues histidine 360 and glutamate 363. N-linked (GlcNAc...) asparagine glycans are attached at residues asparagine 428 and asparagine 472. Residue histidine 498 coordinates Zn(2+). Glutamate 591 serves as the catalytic Proton donor/acceptor.

It belongs to the peptidase M14 family. Requires Zn(2+) as cofactor.

It localises to the secreted. In terms of biological role, may be involved in cell-cell interactions. No carboxypeptidase activity was found yet. This Homo sapiens (Human) protein is Probable carboxypeptidase X1 (CPXM1).